Consider the following 739-residue polypeptide: MSEDSKCPVTGKTAKTAIPMTGRGTTNQDWWPNQLKLNILHQHSSKSNPMGGDFNYAEEFKKLDLAAVKQDLYAMMTDSREWWPADWGHYGGLLIRMAWHSAGTYRMGDGRGGAGSGSQRLAPLNSWPDNVNLDKARRLLWPIKQKYGRKISWADLMVLAGNCALESMGFKTFGFAGGREDAWEPEQDIYWGAEEEWLATSDKPKSRYSGDRDLENPLAAVQMGLIYVNPEGPDGNPDPVASGRDVRETFARMAMNDEETVALVAGGHTFGKCHGAGPATHVGPEPEAAPIEEQGLGWKSSFGSGKGGDTISSGIEGAWKPNPTKWDMGYLKVLFKYEWEKVKSPAGAWQWLAKDVDEEDMIVGAHDPSKKFRPMMTTADLSLRFDPIYEPIARRYLENPEEFADAFARAWFKLTHRDMGPRSRYLGSEVPAEELIWQDPVPAVDHELIDAADIADLKVKILASGLSIPQLVSTAWASASTFRGSDKRGGANGARIRLAPQKDWEVNQPAQLKTVLQTLEGIQQAFNGAQAGGKKVSLADLIVLGGCAAVEQAAGNAGHDVTVPFTPGRTDATSEQTDVASFSVLEPVADGFRNYQKAKFAVRAEELLVDRAQLLTLTAPEMTVLVGGMRVLNTNHGGTPHGVFTDRPETLTNDFFVNLLDMGTTWQPTAEDADIFEGCDRATGELKWTGTRIDLVFGSNSQLRAIAEVYGCADSGEKFVNDFVAVWSKIMNLDRFDLA.

Positions 99–227 (WHSAGTYRMG…LAAVQMGLIY (129 aa)) form a cross-link, tryptophyl-tyrosyl-methioninium (Trp-Tyr) (with M-253). Residue His100 is the Proton acceptor of the active site. Residues 227-253 (YVNPEGPDGNPDPVASGRDVRETFARM) constitute a cross-link (tryptophyl-tyrosyl-methioninium (Tyr-Met) (with W-99)). A heme b-binding site is contributed by His268.

The protein belongs to the peroxidase family. Peroxidase/catalase subfamily. As to quaternary structure, homodimer or homotetramer. The cofactor is heme b. Formation of the three residue Trp-Tyr-Met cross-link is important for the catalase, but not the peroxidase activity of the enzyme.

The enzyme catalyses H2O2 + AH2 = A + 2 H2O. It carries out the reaction 2 H2O2 = O2 + 2 H2O. Its function is as follows. Bifunctional enzyme with both catalase and broad-spectrum peroxidase activity. The protein is Catalase-peroxidase of Syntrophotalea carbinolica (strain DSM 2380 / NBRC 103641 / GraBd1) (Pelobacter carbinolicus).